An 88-amino-acid polypeptide reads, in one-letter code: Large ribosomal subunit protein bL27 (88 aa).

The interval 1–21 (MAHKKGTGSTRNGRDSRAQRL) is disordered.

It belongs to the bacterial ribosomal protein bL27 family.

This is Large ribosomal subunit protein bL27 from Picosynechococcus sp. (strain ATCC 27264 / PCC 7002 / PR-6) (Agmenellum quadruplicatum).